A 103-amino-acid chain; its full sequence is Large ribosomal subunit protein bL21 (103 aa).

The protein belongs to the bacterial ribosomal protein bL21 family. Part of the 50S ribosomal subunit. Contacts protein L20.

In terms of biological role, this protein binds to 23S rRNA in the presence of protein L20. The protein is Large ribosomal subunit protein bL21 of Wolinella succinogenes (strain ATCC 29543 / DSM 1740 / CCUG 13145 / JCM 31913 / LMG 7466 / NCTC 11488 / FDC 602W) (Vibrio succinogenes).